Here is a 1064-residue protein sequence, read N- to C-terminus: DNA-directed RNA polymerase subunit beta (1064 aa).

Belongs to the RNA polymerase beta chain family. In terms of assembly, in plastids the minimal PEP RNA polymerase catalytic core is composed of four subunits: alpha, beta, beta', and beta''. When a (nuclear-encoded) sigma factor is associated with the core the holoenzyme is formed, which can initiate transcription.

The protein resides in the plastid. Its subcellular location is the chloroplast. It catalyses the reaction RNA(n) + a ribonucleoside 5'-triphosphate = RNA(n+1) + diphosphate. Functionally, DNA-dependent RNA polymerase catalyzes the transcription of DNA into RNA using the four ribonucleoside triphosphates as substrates. The polypeptide is DNA-directed RNA polymerase subunit beta (Jasminum nudiflorum (Winter jasmine)).